Here is a 61-residue protein sequence, read N- to C-terminus: Small ribosomal subunit protein bS21 (61 aa).

Positions 40-61 (KPSVKRKKKSEAARKRKNKRRF) are disordered. The span at 43–61 (VKRKKKSEAARKRKNKRRF) shows a compositional bias: basic residues.

The protein belongs to the bacterial ribosomal protein bS21 family.

The protein is Small ribosomal subunit protein bS21 of Ligilactobacillus salivarius (strain UCC118) (Lactobacillus salivarius).